The sequence spans 882 residues: Cutinase transcription factor 1 beta (882 aa).

Positions 1–20 are enriched in low complexity; the sequence is MNAETPEGSAAPPSPASTSA. The tract at residues 1–49 is disordered; that stretch reads MNAETPEGSAAPPSPASTSAKTVTDKTNKKRASPSGDSEQPTKVTKRRA. Positions 53–81 form a DNA-binding region, zn(2)-C6 fungal-type; that stretch reads CVSCRARKVRCDVVEGAPCGNCRWDNVEC. Residues 117–148 are disordered; it reads NPMGMSTADLRRPSSGSAISTSSIDGPSSFLS. The segment covering 130-139 has biased composition (low complexity); sequence SSGSAISTSS.

Its subcellular location is the nucleus. This Fusarium vanettenii (Neocosmospora pisi) protein is Cutinase transcription factor 1 beta (CTF1-BETA).